The following is a 46-amino-acid chain: Delta-actitoxin-Avd1d (46 aa).

Disulfide bonds link cysteine 4-cysteine 44, cysteine 6-cysteine 34, and cysteine 27-cysteine 45.

Belongs to the sea anemone sodium channel inhibitory toxin family. Type I subfamily.

The protein resides in the secreted. Its subcellular location is the nematocyst. Functionally, binds specifically to voltage-gated sodium channels (Nav), thereby delaying their inactivation during signal transduction. Thus it strongly stimulates mammalian cardiac muscle contraction. This Anemonia sulcata (Mediterranean snakelocks sea anemone) protein is Delta-actitoxin-Avd1d.